The chain runs to 189 residues: Holliday junction branch migration complex subunit RuvA (189 aa).

The tract at residues 1-62 (MIVALKGNIE…EEAWSLYGFA (62 aa)) is domain I. Residues 63 to 138 (EEAEKRVFDT…FSLSLQEGSK (76 aa)) form a domain II region. Positions 138–139 (KA) are flexible linker. The interval 140–189 (STPPVFEESRLALESLGFKSELIAKALQNIQATTTQEIIKEALKKLQTLR) is domain III.

Belongs to the RuvA family. In terms of assembly, homotetramer. Forms an RuvA(8)-RuvB(12)-Holliday junction (HJ) complex. HJ DNA is sandwiched between 2 RuvA tetramers; dsDNA enters through RuvA and exits via RuvB. An RuvB hexamer assembles on each DNA strand where it exits the tetramer. Each RuvB hexamer is contacted by two RuvA subunits (via domain III) on 2 adjacent RuvB subunits; this complex drives branch migration. In the full resolvosome a probable DNA-RuvA(4)-RuvB(12)-RuvC(2) complex forms which resolves the HJ.

Its subcellular location is the cytoplasm. In terms of biological role, the RuvA-RuvB-RuvC complex processes Holliday junction (HJ) DNA during genetic recombination and DNA repair, while the RuvA-RuvB complex plays an important role in the rescue of blocked DNA replication forks via replication fork reversal (RFR). RuvA specifically binds to HJ cruciform DNA, conferring on it an open structure. The RuvB hexamer acts as an ATP-dependent pump, pulling dsDNA into and through the RuvAB complex. HJ branch migration allows RuvC to scan DNA until it finds its consensus sequence, where it cleaves and resolves the cruciform DNA. The chain is Holliday junction branch migration complex subunit RuvA from Wolinella succinogenes (strain ATCC 29543 / DSM 1740 / CCUG 13145 / JCM 31913 / LMG 7466 / NCTC 11488 / FDC 602W) (Vibrio succinogenes).